The sequence spans 290 residues: Poly-beta-1,6-N-acetyl-D-glucosamine N-deacetylase (290 aa).

Positions 1–28 (MKYRKLIILVLSILIILPVSTLDGHHIA) are cleaved as a signal peptide. In terms of domain architecture, NodB homology spans 114–290 (RSVWINFDDM…KRWDGFHEKD (177 aa)).

It belongs to the polysaccharide deacetylase family.

The protein localises to the secreted. It localises to the cell wall. Functionally, catalyzes the N-deacetylation of poly-beta-1,6-N-acetyl-D-glucosamine (PNAG, also referred to as PIA), a biofilm adhesin polysaccharide. N-deacetylation is crucial for attachment of the polysaccharide to the bacterial cell surface; it leads to the introduction of positive charges in the otherwise neutral PIA polymer, allowing electrostatic interactions. The chain is Poly-beta-1,6-N-acetyl-D-glucosamine N-deacetylase (icaB) from Staphylococcus aureus (strain Mu50 / ATCC 700699).